The sequence spans 1092 residues: MPAGSNEPDGVLSYQRPDEEAVVDQGGTSTILNIHYEKEELEGHRTLYVGVRMPLGRQSHRHHRTHGQKHRRRGGRGKGASQGEEGLEASAHDTPSQRVQFILGTEEDEEHVPHELFTELDEICMKEGEEAEWKETARWLKFEEDVEDGGERWSKPYVATLSLHSLFELRSCLINGSVLLDMRASSIEEISDLILDQQELLRDLSDSVRVKVREALLKKHHHQNEKKRNNLIPIVRSFAEVGKKQSDPHSMDRDGQTVSPQSAPATNLEVKNGVNCEHSPVDLSKADLHFMKKIPAGAEASNVLVGEVDTLDRPIVAFVRLSPAVLLSGLTEVPIPTRFLFILLGPVGKGQQYHEIGRSMATIMTDEIFHDVAYKAKERDDLLAGIDEFLDQVTVLPPGEWDPSIRIEPPKNVPSQEKRKMPGVPNGNICHVEPEPHGGHSGPELERTGRLFGGLVLDVKRKAPWYWSDYRDALSLQCLASFLFLYCACMSPVITFGGLLGEATEGRISAIESLFGASMTGIAYSLFAGQPLTILGSTGPVLVFEKILFKFCKDYALSYLSLRACIGLWTAFLCIVLVATDASSLVCYITRFTEEAFASLICIIFIYEAIEKLIHLAETYPIHMHSQLDHLSLYYCRCALPENPNNHTLQYWKEHSIPTADVNWANLTVSECQEMHGEFIGSACGHHGPYTPDVLFWSCILFFATFIVSSTLKTFKTSRYFPTRVRSTVSDFAVFLTIFTMVILDFLIGVPSPKLQVPSVFKPTRDDRGWFISPIGPNPWWTVIAAIIPALLCTILIFMDQQITAVIINRKEHKLKKGCGYHLDLLVVAIMLGVCSLMGLPWFVAATVLSITHVNSLKLESECSAPGEQPKFLGIREQRVTGLMIFVLMGCSVFMTAVLKFIPMPVLYGVFLYMGVSSLQGIQFFDRLKLFGMPAKHQPDFIYLRHVPLRKVHLFTLVQLTCLVLLWVIKASPAAIVFPMMVLALVFVRKVMDLCFSKRELSWLDDLMPESKKKKLDDAKKKEEEEEAEKMLDIGGDKFPLESRKLLSSPGKNNSFRCDPSEINISDEMPKTTVWKALSINSGNTKEKSPFN.

3 disordered regions span residues 1–26, 55–95, and 243–263; these read MPAGSNEPDGVLSYQRPDEEAVVDQG, LGRQ…HDTP, and KKQSDPHSMDRDGQTVSPQSA. The Extracellular portion of the chain corresponds to 1-478; it reads MPAGSNEPDG…DYRDALSLQC (478 aa). Residues 58–76 show a composition bias toward basic residues; that stretch reads QSHRHHRTHGQKHRRRGGR. Positions 243 to 255 are enriched in basic and acidic residues; the sequence is KKQSDPHSMDRDG. The chain crosses the membrane as a helical span at residues 479-499; that stretch reads LASFLFLYCACMSPVITFGGL. Residues 500 to 507 lie on the Cytoplasmic side of the membrane; the sequence is LGEATEGR. Residues 508–528 traverse the membrane as a helical segment; that stretch reads ISAIESLFGASMTGIAYSLFA. The Extracellular segment spans residues 529 to 565; sequence GQPLTILGSTGPVLVFEKILFKFCKDYALSYLSLRAC. The chain crosses the membrane as a helical span at residues 566–586; sequence IGLWTAFLCIVLVATDASSLV. Over 587–595 the chain is Cytoplasmic; the sequence is CYITRFTEE. A helical membrane pass occupies residues 596–616; it reads AFASLICIIFIYEAIEKLIHL. At 617–687 the chain is on the extracellular side; the sequence is AETYPIHMHS…EFIGSACGHH (71 aa). Cystine bridges form between C636/C684 and C638/C672. N646 and N666 each carry an N-linked (GlcNAc) asparagine glycan. The chain crosses the membrane as a helical span at residues 688–708; that stretch reads GPYTPDVLFWSCILFFATFIV. Residues 709–731 are Cytoplasmic-facing; the sequence is SSTLKTFKTSRYFPTRVRSTVSD. Residues 732 to 752 form a helical membrane-spanning segment; that stretch reads FAVFLTIFTMVILDFLIGVPS. Over 753-778 the chain is Extracellular; the sequence is PKLQVPSVFKPTRDDRGWFISPIGPN. Residues 779-799 form a helical membrane-spanning segment; that stretch reads PWWTVIAAIIPALLCTILIFM. Residues 800-824 are Cytoplasmic-facing; sequence DQQITAVIINRKEHKLKKGCGYHLD. A helical membrane pass occupies residues 825-845; sequence LLVVAIMLGVCSLMGLPWFVA. The Extracellular portion of the chain corresponds to 846 to 881; that stretch reads ATVLSITHVNSLKLESECSAPGEQPKFLGIREQRVT. A helical transmembrane segment spans residues 882–902; it reads GLMIFVLMGCSVFMTAVLKFI. Topologically, residues 903–904 are cytoplasmic; sequence PM. A helical transmembrane segment spans residues 905–925; it reads PVLYGVFLYMGVSSLQGIQFF. Topologically, residues 926–962 are extracellular; that stretch reads DRLKLFGMPAKHQPDFIYLRHVPLRKVHLFTLVQLTC. Residues 963-983 traverse the membrane as a helical segment; that stretch reads LVLLWVIKASPAAIVFPMMVL. Residues 984 to 1092 lie on the Cytoplasmic side of the membrane; the sequence is ALVFVRKVMD…GNTKEKSPFN (109 aa).

It belongs to the anion exchanger (TC 2.A.31) family. As to quaternary structure, homodimer. Expressed in the Purkinje cells and dendrites in the molecular layer of the cerebellum (at protein level). Expressed in the hippocampal neurons (at protein level). Strong expression observed in testis and moderate expression in kidney inner medulla, the submandibular gland, eye, cerebrum and cerebellum.

The protein resides in the cell membrane. It localises to the apical cell membrane. It is found in the basolateral cell membrane. The protein localises to the cytoplasmic vesicle. Its subcellular location is the secretory vesicle. The protein resides in the synaptic vesicle membrane. It catalyses the reaction 2 hydrogencarbonate(out) + chloride(in) + Na(+)(out) = 2 hydrogencarbonate(in) + chloride(out) + Na(+)(in). In terms of biological role, mediates electroneutral sodium- and carbonate-dependent chloride-HCO3(-) exchange with a Na(+):HCO3(-) stoichiometry of 2:1. Plays a major role in pH regulation in neurons. Mediates sodium reabsorption in the renal cortical collecting ducts. This is Electroneutral sodium bicarbonate exchanger 1 from Rattus norvegicus (Rat).